The following is a 458-amino-acid chain: Phosphoglucosamine mutase (458 aa).

Catalysis depends on serine 106, which acts as the Phosphoserine intermediate. Positions 106, 247, 249, and 251 each coordinate Mg(2+). Position 106 is a phosphoserine (serine 106).

This sequence belongs to the phosphohexose mutase family. It depends on Mg(2+) as a cofactor. Activated by phosphorylation.

It carries out the reaction alpha-D-glucosamine 1-phosphate = D-glucosamine 6-phosphate. In terms of biological role, catalyzes the conversion of glucosamine-6-phosphate to glucosamine-1-phosphate. The protein is Phosphoglucosamine mutase of Chlamydia pneumoniae (Chlamydophila pneumoniae).